A 1432-amino-acid chain; its full sequence is Probable ATP-dependent RNA helicase spindle-E (1432 aa).

The Helicase ATP-binding domain maps to 124–291 (LAAINAHPVV…FTTTNSVPPV (168 aa)). 137–144 (GQTGCGKT) is a binding site for ATP. The DEAH box signature appears at 237-240 (DEVH). The Helicase C-terminal domain maps to 337-524 (KIIMVIDNME…NSVLRAKELE (188 aa)). The Tudor domain maps to 936 to 999 (AGAITKGMMV…RLMPKELIQQ (64 aa)).

This sequence belongs to the DEAD box helicase family. DEAH subfamily.

The protein localises to the cytoplasm. It carries out the reaction ATP + H2O = ADP + phosphate + H(+). Probable ATP-binding RNA helicase which plays a central role during spermatogenesis and oogenesis by repressing transposable elements and preventing their mobilization, which is essential for the germline integrity. Acts via the piRNA metabolic process, which mediates the repression of transposable elements during meiosis by forming complexes composed of piRNAs and Piwi and govern the methylation and subsequent repression of transposons. Involved in the repression of LTR retrotransposon copia. Also involved in telomere regulation by repressing specialized telomeric retroelements HeT-A, TAHRE, and TART; Drosophila telomeres being maintained by transposition of specialized telomeric retroelements. Involved in telomeric trans-silencing, a repression mechanism by which a transposon or a transgene inserted in subtelomeric heterochromatin has the capacity to repress in trans in the female germline, a homologous transposon, or transgene located in euchromatin. Involved in the repression of testis-expressed Stellate genes by the homologous Su(Ste) repeats. Required for anteroposterior and dorsoventral axis formation during oogenesis. The protein is Probable ATP-dependent RNA helicase spindle-E (spn-E) of Drosophila erecta (Fruit fly).